We begin with the raw amino-acid sequence, 336 residues long: Methionyl-tRNA formyltransferase (336 aa).

(6S)-5,6,7,8-tetrahydrofolate is bound at residue 112–115 (SILP).

This sequence belongs to the Fmt family.

It catalyses the reaction L-methionyl-tRNA(fMet) + (6R)-10-formyltetrahydrofolate = N-formyl-L-methionyl-tRNA(fMet) + (6S)-5,6,7,8-tetrahydrofolate + H(+). Attaches a formyl group to the free amino group of methionyl-tRNA(fMet). The formyl group appears to play a dual role in the initiator identity of N-formylmethionyl-tRNA by promoting its recognition by IF2 and preventing the misappropriation of this tRNA by the elongation apparatus. The sequence is that of Methionyl-tRNA formyltransferase from Trichodesmium erythraeum (strain IMS101).